We begin with the raw amino-acid sequence, 644 residues long: DNA mismatch repair protein MutL (644 aa).

Residues 336–356 are disordered; that stretch reads KRNINPLNRDDKTKDKSEYQK. The segment covering 343 to 356 has biased composition (basic and acidic residues); that stretch reads NRDDKTKDKSEYQK.

It belongs to the DNA mismatch repair MutL/HexB family.

This protein is involved in the repair of mismatches in DNA. It is required for dam-dependent methyl-directed DNA mismatch repair. May act as a 'molecular matchmaker', a protein that promotes the formation of a stable complex between two or more DNA-binding proteins in an ATP-dependent manner without itself being part of a final effector complex. In Halothermothrix orenii (strain H 168 / OCM 544 / DSM 9562), this protein is DNA mismatch repair protein MutL.